Reading from the N-terminus, the 684-residue chain is Transcriptional regulatory protein RCO1 (684 aa).

Residue methionine 1 is modified to N-acetylmethionine. Positions 1 to 48 (MDTSKKDTTRSPSHSNSSSPSSSSLSSSSSKEKKRPKRLSSQNVNYDL) are disordered. Residues 10-29 (RSPSHSNSSSPSSSSLSSSS) show a composition bias toward low complexity. Serine 68 is subject to Phosphoserine. A PHD-type 1 zinc finger spans residues 260 to 309 (EDFCSACNQSGSFLCCDTCPKSFHFLCLDPPIDPNNLPKGDWHCNECKFK). The PHD-type 2; atypical zinc finger occupies 414 to 472 (FLICYKCNQTRLGSWSHPENSRLIMTCDYCQTPWHLDCVPRASFKNLGSKWKCPLHSPT). Residue serine 683 is modified to Phosphoserine.

As to quaternary structure, component of the RPD3C(S) complex composed of at least EAF3, RCO1, RPD3, SIN3, and UME1.

The protein localises to the nucleus. Its function is as follows. Catalytic component of the RPD3C(S) histone deacetylase complex responsible for the deacetylation of lysine residues on the N-terminal part of the core histones (H2A, H2B, H3 and H4). Histone deacetylation gives a tag for epigenetic repression and plays an important role in transcriptional regulation, cell cycle progression, DNA damage response, osmotic stress response and developmental events. In Saccharomyces cerevisiae (strain ATCC 204508 / S288c) (Baker's yeast), this protein is Transcriptional regulatory protein RCO1 (RCO1).